The primary structure comprises 83 residues: U5-theraphotoxin-Hs1b 1 (83 aa).

A signal peptide spans 1 to 21 (MKTSMFLTLTGLVLLFVVCYA). Residues 22 to 49 (SESEEKEFPKELLSSIFAADSDFKEEER) constitute a propeptide that is removed on maturation. Cystine bridges form between Cys51/Cys63, Cys56/Cys68, and Cys62/Cys75.

Belongs to the neurotoxin 10 (Hwtx-1) family. 51 (Hntx-8) subfamily. Hntx-8 sub-subfamily. As to expression, expressed by the venom gland.

It localises to the secreted. Functionally, weakly inhibits 5HT3A receptors and Kv1.3/KCNA3 voltage-gated potassium channels. Agglutinates erythrocytes. This chain is U5-theraphotoxin-Hs1b 1, found in Cyriopagopus schmidti (Chinese bird spider).